A 192-amino-acid polypeptide reads, in one-letter code: Phosphoheptose isomerase (192 aa).

The SIS domain occupies 36–192; the sequence is CVDSLAAGGK…DQVEAVAAPA (157 aa). Substrate is bound at residue 51–53; it reads NGG. Zn(2+) contacts are provided by His60 and Glu64. Residues Glu64, 93–94, 119–121, Ser124, and Gln171 each bind substrate; these read ND and TTS. Zn(2+) contacts are provided by Gln171 and His179.

The protein belongs to the SIS family. GmhA subfamily. As to quaternary structure, homotetramer. Zn(2+) is required as a cofactor.

It is found in the cytoplasm. The catalysed reaction is 2 D-sedoheptulose 7-phosphate = D-glycero-alpha-D-manno-heptose 7-phosphate + D-glycero-beta-D-manno-heptose 7-phosphate. It participates in carbohydrate biosynthesis; D-glycero-D-manno-heptose 7-phosphate biosynthesis; D-glycero-alpha-D-manno-heptose 7-phosphate and D-glycero-beta-D-manno-heptose 7-phosphate from sedoheptulose 7-phosphate: step 1/1. Catalyzes the isomerization of sedoheptulose 7-phosphate in D-glycero-D-manno-heptose 7-phosphate. The sequence is that of Phosphoheptose isomerase from Paramagnetospirillum magneticum (strain ATCC 700264 / AMB-1) (Magnetospirillum magneticum).